We begin with the raw amino-acid sequence, 231 residues long: Enolase-phosphatase E1 (231 aa).

Mg(2+) is bound by residues D11 and E13. Substrate-binding positions include 125 to 126 and K162; that span reads SS. D188 is a Mg(2+) binding site.

It belongs to the HAD-like hydrolase superfamily. MasA/MtnC family. Monomer. The cofactor is Mg(2+).

The protein localises to the cytoplasm. The protein resides in the nucleus. It carries out the reaction 5-methylsulfanyl-2,3-dioxopentyl phosphate + H2O = 1,2-dihydroxy-5-(methylsulfanyl)pent-1-en-3-one + phosphate. The protein operates within amino-acid biosynthesis; L-methionine biosynthesis via salvage pathway; L-methionine from S-methyl-5-thio-alpha-D-ribose 1-phosphate: step 3/6. It participates in amino-acid biosynthesis; L-methionine biosynthesis via salvage pathway; L-methionine from S-methyl-5-thio-alpha-D-ribose 1-phosphate: step 4/6. Its function is as follows. Bifunctional enzyme that catalyzes the enolization of 2,3-diketo-5-methylthiopentyl-1-phosphate (DK-MTP-1-P) into the intermediate 2-hydroxy-3-keto-5-methylthiopentenyl-1-phosphate (HK-MTPenyl-1-P), which is then dephosphorylated to form the acireductone 1,2-dihydroxy-3-keto-5-methylthiopentene (DHK-MTPene). The sequence is that of Enolase-phosphatase E1 from Pyricularia oryzae (strain 70-15 / ATCC MYA-4617 / FGSC 8958) (Rice blast fungus).